Here is a 217-residue protein sequence, read N- to C-terminus: Pyrrolidone-carboxylate peptidase (217 aa).

Catalysis depends on residues Glu-78, Cys-141, and His-168.

The protein belongs to the peptidase C15 family. In terms of assembly, homotetramer.

It is found in the cytoplasm. The catalysed reaction is Release of an N-terminal pyroglutamyl group from a polypeptide, the second amino acid generally not being Pro.. Removes 5-oxoproline from various penultimate amino acid residues except L-proline. This chain is Pyrrolidone-carboxylate peptidase, found in Treponema denticola (strain ATCC 35405 / DSM 14222 / CIP 103919 / JCM 8153 / KCTC 15104).